We begin with the raw amino-acid sequence, 674 residues long: Multifunctional alkene reductase/demethylase OYE (674 aa).

FMN contacts are provided by G62 and Q105. The active-site Proton donor is H175. The FMN site is built by R223 and K299. [4Fe-4S] cluster is bound by residues C345, C351, and C358. Positions 391, 418, and 428 each coordinate FAD.

The protein in the N-terminal section; belongs to the NADH:flavin oxidoreductase/NADH oxidase family. [4Fe-4S] cluster is required as a cofactor. It depends on FAD as a cofactor. Requires FMN as cofactor.

It catalyses the reaction 3-phenylpropanoate + NAD(+) = (E)-cinnamate + NADH + H(+). It carries out the reaction N-methyl-L-proline + NAD(+) + H2O = L-proline + formaldehyde + NADH + H(+). Functionally, a member of the 2-enoate reductase subfamily of old yellow enzymes (OYE) able to reduce alpha/beta alkenes near electron-withdrawing groups as well as perform oxidative demethylation chemistry. Prefers NADH over NADPH as cosubstrate. May play a role in osmotic stress response in situ. The chain is Multifunctional alkene reductase/demethylase OYE from Caballeronia cordobensis (Burkholderia cordobensis).